Here is a 67-residue protein sequence, read N- to C-terminus: Large ribosomal subunit protein bL35 (67 aa).

It belongs to the bacterial ribosomal protein bL35 family.

This chain is Large ribosomal subunit protein bL35, found in Methylorubrum extorquens (strain CM4 / NCIMB 13688) (Methylobacterium extorquens).